Consider the following 144-residue polypeptide: Large ribosomal subunit protein uL13 (144 aa).

Belongs to the universal ribosomal protein uL13 family. Part of the 50S ribosomal subunit.

Functionally, this protein is one of the early assembly proteins of the 50S ribosomal subunit, although it is not seen to bind rRNA by itself. It is important during the early stages of 50S assembly. The protein is Large ribosomal subunit protein uL13 of Chloroflexus aurantiacus (strain ATCC 29366 / DSM 635 / J-10-fl).